We begin with the raw amino-acid sequence, 1588 residues long: MSWKRNYFSGGRGSVQGMFAPRSSMSIAPSKGLSNEPGQNSCFLNSALQVLWHLDIFRRSFRQLTSHKCMGDSCIFCALKGIFKQFQCSSEKVLPSDTLRSALAKTFQDEQRFQLGIMDDAAECFENLLMRIHFHIADETKEDICTAPHCISHQKFAMTLFEQCVCTSCGATSDPLPFIQMVHYISTTSLCNQAICMLEKREKPSPGMFGELLQNASTMGDLRDCPSNCGERIRIRRVLMNAPQIITIGLVWDSDHSDLAEDVIHSLGTCLKLGDLFFRVTDDRAKQSELYLVGMICYYGKHYSTFFFQTKIRKWMYFDDAHVKEIGPKWKDVVTKCIKGHYQPLLLLYADPQGTPVSAQDLPPHAQLLSHTKTCYDSEDSGHLTDSECNQKHTTKKGPLVERRRGSGRIRRKADAPQASGYHSEGETLKEKQAPRNASKSSSTSRLKDFKETVSNMIHSRPSLASQTNAASPCVGRAGDQPDKIPARNLPLHSRGWETESTSSEARSSSSSKYRPTWRPKRESLNIDSIFSKDKRKHCGYTQLKTFPEDAAKEFAQDEVSNPVANDIKDGGPSSQHKLWGTARPGSHLLEQHPRLIQRMESGYESSERNSSSPVSLDAAPPECLNVYRDQSTKRAVGFVPSWRHIPKSHSSSILEVDSTAPVTGWTETQPFSDGEITSKSELDELQEEVARRAQEQELRKKREKELEAAKGFNPHPSRYMDLDELQNQGRSDGFERSLQEANSVFEESLHLEQEGDCAAALALCNEAISKLRLTLHDASSSTHSRALVDKKLQISIRKARSLQDRMQQQPPSQQPVQPSASLPSQGGGLPQPTSEQSVPLQVLLSQQTQLEPCKDSELGATSPFFHSPASCPEPHSSLVSPSPAQSVSQHSPPGTSALKLLKSFEVDIVNHSAFHRQDLPKATGRTEMNSQHECLPFDALEDRLQGHREDNSCCSKFPPQEGRDTTQDQLLEGRKTPVDISMGMPWSHSAGGATSERVMHSLNSPSSPSAQPAVPPYGACHPIMSAAASPVLHAADPMQKLNQHLQAQSLQTSLASKVVRGSEEPYRPEFPSTKGLVRSLAEQFQKIRNTSTRDVIGSQDRSLPNGLRKSSSPSDFMLPLSQGPEKEHCRWVNQPPSPDGRERQPCWEEPAGHPSVSIDSGLPNGEASRRRQPRLAEADIYQGKLPQVTDTRPTELGSSVSLGTSLPLDSWVNVTRLCDSQVKHRAPGLGVKSSSHDSRTCVTYPERNPILLHPHWNQDTEQETSELESLYQASLQASSHTGYSDWRSQDVAWQPLSLTGSADGMGRRLHSAPGLDLSKTPTAEMERILYEPSTVPVSQDSSNVRKKTLETGHHCSSSSSLPVIHDPPVFLLDPKLYPPQPQFLSPDVLMPSMAGEPYRSPGTSRSVQQFLAMCDRDETPQGVKYTGRTLNYRSLPHRSRTDASWGPGTETNQHIGARVLTAPACKPQLTYTATLPERHQGLQVPHAQSWGNLFHLPSHPSAVHPGSPPSSSLHVLHRSSWNSGSVLGSRTPGPRRIDVPPDDDGRQSQYPSQYRHRSAGEERVRFALSNTAGTEQSRVRLLQHSRW.

An Omega-N-methylarginine modification is found at arginine 12. One can recognise a USP domain in the interval 31 to 352; the sequence is KGLSNEPGQN…QPLLLLYADP (322 aa). The active-site Nucleophile is cysteine 42. Positions 67, 69, 74, 77, 133, 145, 150, 153, 166, 169, 225, and 229 each coordinate Zn(2+). The active-site Proton acceptor is the histidine 302. Composition is skewed to basic and acidic residues over residues 380–391 and 424–434; these read DSGHLTDSECNQ and SEGETLKEKQA. 2 disordered regions span residues 380–447 and 459–519; these read DSGH…TSRL and HSRP…PTWR. Phosphoserine is present on serine 424. Composition is skewed to polar residues over residues 436–445 and 459–471; these read RNASKSSSTS and HSRPSLASQTNAA. Over residues 499–512 the composition is skewed to low complexity; the sequence is TESTSSEARSSSSS. Phosphoserine is present on residues serine 574, serine 613, and serine 616. The segment covering 601–616 has biased composition (low complexity); the sequence is ESGYESSERNSSSPVS. Positions 601-620 are disordered; that stretch reads ESGYESSERNSSSPVSLDAA. Residues 678 to 712 are a coiled coil; it reads TSKSELDELQEEVARRAQEQELRKKREKELEAAKG. Disordered regions lie at residues 801–839, 856–895, 950–969, 1093–1172, and 1525–1562; these read RSLQDRMQQQPPSQQPVQPSASLPSQGGGLPQPTSEQSV, DSELGATSPFFHSPASCPEPHSSLVSPSPAQSVSQHSPPG, EDNSCCSKFPPQEGRDTTQD, TRDV…SRRR, and GSVLGSRTPGPRRIDVPPDDDGRQSQYPSQYRHRSAGE. Positions 808-825 are enriched in low complexity; the sequence is QQQPPSQQPVQPSASLPS. Positions 878 to 895 are enriched in polar residues; the sequence is SLVSPSPAQSVSQHSPPG. Position 1138 is a phosphoserine (serine 1138). The span at 1536-1547 shows a compositional bias: basic and acidic residues; that stretch reads RRIDVPPDDDGR.

This sequence belongs to the peptidase C19 family.

It carries out the reaction Thiol-dependent hydrolysis of ester, thioester, amide, peptide and isopeptide bonds formed by the C-terminal Gly of ubiquitin (a 76-residue protein attached to proteins as an intracellular targeting signal).. Deubiquitinase that specifically mediates 'Lys-63'-linked deubiquitination of substrates with a polyubiquitin chain composed of at least 3 ubiquitins. Specifically recognizes ubiquitin chain in position S2 and catalyzes cleavage of polyubiquitin within 'Lys-63'-linked chains. Not able to deubiquitinate substrates with shorter ubiquitin chains. Mediates deubiquitination of PLK4, maintaining PLK4 stability by reducing its ubiquitination-mediated degradation. The protein is Ubiquitin carboxyl-terminal hydrolase 54 (Usp54) of Rattus norvegicus (Rat).